The sequence spans 549 residues: Cation/acetate symporter ActP (549 aa).

The next 13 helical transmembrane spans lie at 33 to 53 (WQAI…TYWA), 76 to 96 (GLAI…SALV), 103 to 123 (GLIY…LIAE), 149 to 169 (LSAC…MVGA), 183 to 203 (IAVV…GMLA), 206 to 226 (WVQI…AFMV), 262 to 282 (ISAL…PHIL), 303 to 323 (GFMG…IMLV), 355 to 375 (LFLG…VAGL), 404 to 424 (VSKI…ILFE), 428 to 448 (IAFM…PIIL), 463 to 483 (IGGW…PTIW), and 493 to 513 (IFPY…GIWF).

It belongs to the sodium:solute symporter (SSF) (TC 2.A.21) family.

Its subcellular location is the cell inner membrane. In terms of biological role, transports acetate. This chain is Cation/acetate symporter ActP, found in Enterobacter sp. (strain 638).